Consider the following 489-residue polypeptide: 3-octaprenyl-4-hydroxybenzoate carboxy-lyase (489 aa).

Residue Asn172 participates in Mn(2+) binding. Prenylated FMN contacts are provided by residues 175-177, 189-191, and 194-195; these read IYR, RWL, and RG. Glu238 provides a ligand contact to Mn(2+). Asp287 acts as the Proton donor in catalysis.

It belongs to the UbiD family. As to quaternary structure, homohexamer. Prenylated FMN is required as a cofactor. It depends on Mn(2+) as a cofactor.

The protein localises to the cell membrane. It carries out the reaction a 4-hydroxy-3-(all-trans-polyprenyl)benzoate + H(+) = a 2-(all-trans-polyprenyl)phenol + CO2. It functions in the pathway cofactor biosynthesis; ubiquinone biosynthesis. Its function is as follows. Catalyzes the decarboxylation of 3-octaprenyl-4-hydroxy benzoate to 2-octaprenylphenol, an intermediate step in ubiquinone biosynthesis. This Salmonella arizonae (strain ATCC BAA-731 / CDC346-86 / RSK2980) protein is 3-octaprenyl-4-hydroxybenzoate carboxy-lyase.